The primary structure comprises 945 residues: Glutamyl aminopeptidase (945 aa).

At 1-18 the chain is on the cytoplasmic side; that stretch reads MNFAEEEPSKKYCIKGKH. The chain crosses the membrane as a helical; Signal-anchor for type II membrane protein span at residues 19 to 39; the sequence is VAIICGVVVAVGLIVGLSVGL. The Extracellular portion of the chain corresponds to 40–945; that stretch reads TRSCEQDTTP…SIREWFASLP (906 aa). The segment at 43 to 77 is disordered; the sequence is CEQDTTPAPSQPPPEASTALPPQDQNVCPDSEDES. 2 N-linked (GlcNAc...) asparagine glycosylation sites follow: N116 and N189. E215 lines the substrate pocket. A glycan (N-linked (GlcNAc...) asparagine) is linked at N316. 349-353 lines the substrate pocket; the sequence is GAMEN. H385 is a Zn(2+) binding site. E386 functions as the Proton acceptor in the catalytic mechanism. 2 residues coordinate Zn(2+): H389 and E408. Residues N546, N601, N637, N669, N754, and N792 are each glycosylated (N-linked (GlcNAc...) asparagine). R878 serves as a coordination point for substrate.

It belongs to the peptidase M1 family. In terms of assembly, homodimer; disulfide-linked. Requires Zn(2+) as cofactor. As to expression, early B-lineage cells and certain stromal cell of hemopoietic tissues. Also expressed by capillary endothelial cells, placenta, and epithelial cells of the intestine and proximal renal tubules.

It is found in the cell membrane. It catalyses the reaction Release of N-terminal glutamate (and to a lesser extent aspartate) from a peptide.. With respect to regulation, substrate specificity is modulated by calcium which enhances the enzymatic activity for cleavage of acidic residues while reducing its activity with basic residues. Inhibited by aminopeptidase inhibitors amastatin and bestatin. Its function is as follows. Regulates central hypertension through its calcium-modulated preference to cleave N-terminal acidic residues from peptides such as angiotensin II. The sequence is that of Glutamyl aminopeptidase (Enpep) from Mus musculus (Mouse).